We begin with the raw amino-acid sequence, 385 residues long: Odorant receptor 82a (385 aa).

Residues 1 to 32 (MGRLFQLQEYCLRAMGHKDDMDSTDSTALSLK) are Cytoplasmic-facing. The chain crosses the membrane as a helical span at residues 33 to 53 (HISSLIFVISAQYPLISYVAY). Residues 54-62 (NRNDMEKVT) lie on the Extracellular side of the membrane. The chain crosses the membrane as a helical span at residues 63-83 (ACLSVVFTNMLTVIKISTFLA). The Cytoplasmic portion of the chain corresponds to 84–131 (NRKDFWEMIHRFRKMHEQSASHIPRYREGLDYVAEANKLASFLGRAYC). The helical transmembrane segment at 132–152 (VSCGLTGLYFMLGPIVKIGVC) threads the bilayer. At 153 to 186 (RWHGTTCDKELPMPMKFPFNDLESPGYEVCFLYT) the chain is on the extracellular side. The chain crosses the membrane as a helical span at residues 187 to 207 (VLVTVVVVAYASAVDGLFISF). Residues 208–257 (AINLRAHFQTLQRQIENWEFPSSEPDTQIRLKSIVEYHVLLLSLSRKLRS) are Cytoplasmic-facing. The chain crosses the membrane as a helical span at residues 258 to 278 (IYTPTVMGQFVITSLQVGVII). Residues 279–290 (YQLVTNMDSVMD) lie on the Extracellular side of the membrane. A helical membrane pass occupies residues 291–311 (LLLYASFFGSIMLQLFIYCYG). Topologically, residues 312 to 357 (GEIIKAESLQVDTAVRLSNWHLASPKTRTSLSLIILQSQKEVLIRA) are cytoplasmic. A helical membrane pass occupies residues 358–378 (GFFVASLANFVGICRTALSLI). Residues 379–385 (TLIKSIE) are Extracellular-facing.

It belongs to the insect chemoreceptor superfamily. Heteromeric odorant receptor channel (TC 1.A.69) family. Or1a subfamily. As to quaternary structure, interacts with Orco. Complexes exist early in the endomembrane system in olfactory sensory neurons (OSNs), coupling these complexes to the conserved ciliary trafficking pathway. As to expression, expressed in olfactory sensory neurons in the antenna.

It is found in the cell membrane. Its function is as follows. Odorant receptor which mediates acceptance or avoidance behavior, depending on its substrates. The odorant receptor repertoire encodes a large collection of odor stimuli that vary widely in identity, intensity, and duration. May form a complex with Orco to form odorant-sensing units, providing sensitive and prolonged odorant signaling and calcium permeability. This is Odorant receptor 82a (Or82a) from Drosophila melanogaster (Fruit fly).